The following is a 125-amino-acid chain: U-scoloptoxin(05)-Er1a (125 aa).

The first 20 residues, Met1–Gly20, serve as a signal peptide directing secretion.

This sequence belongs to the scoloptoxin-05 family. Post-translationally, contains 4 disulfide bonds. In terms of tissue distribution, expressed by the venom gland.

It is found in the secreted. This Ethmostigmus rubripes (Giant centipede) protein is U-scoloptoxin(05)-Er1a.